The sequence spans 303 residues: N-acetyl-D-glucosamine kinase (303 aa).

Residues Gly4–Lys11 and Gly133–Val140 contribute to the ATP site. Positions 157, 177, 179, and 184 each coordinate Zn(2+).

Belongs to the ROK (NagC/XylR) family. NagK subfamily.

It carries out the reaction N-acetyl-D-glucosamine + ATP = N-acetyl-D-glucosamine 6-phosphate + ADP + H(+). The protein operates within cell wall biogenesis; peptidoglycan recycling. In terms of biological role, catalyzes the phosphorylation of N-acetyl-D-glucosamine (GlcNAc) derived from cell-wall degradation, yielding GlcNAc-6-P. In Erwinia tasmaniensis (strain DSM 17950 / CFBP 7177 / CIP 109463 / NCPPB 4357 / Et1/99), this protein is N-acetyl-D-glucosamine kinase.